The chain runs to 495 residues: Dipeptide and tripeptide permease B (495 aa).

The Cytoplasmic segment spans residues 1-16 (MDNKVSILNQPKPFKM). Residues 17–37 (IFFIELWERFGYYGLQGILAV) traverse the membrane as a helical segment. Residues 38-50 (YFVDKLGFSMQDS) are Periplasmic-facing. The helical transmembrane segment at 51–71 (FVTFGAFAALVYGLVSVGGYV) threads the bilayer. Topologically, residues 72-80 (GDYVLGTKR) are cytoplasmic. The chain crosses the membrane as a helical span at residues 81-101 (TMVFGAVVLALGYFLMGFSIL). Residues 102–104 (NPN) lie on the Periplasmic side of the membrane. A helical transmembrane segment spans residues 105–125 (FIYVALGAIAVGNGLFKANPS). At 126-144 (SLLAKCYEKGDSRLDGAFT) the chain is on the cytoplasmic side. The chain crosses the membrane as a helical span at residues 145 to 165 (LYYMSINIGSLVSLSISPVIA). At 166-170 (NNYGY) the chain is on the periplasmic side. The chain crosses the membrane as a helical span at residues 171 to 191 (EYAFIICGLGLIASLFSYFSL). The Cytoplasmic portion of the chain corresponds to 192–209 (RSTVQGIGSEPDALPLNK). The helical transmembrane segment at 210–230 (TKALIVLIGTIASTLVCAWLL) threads the bilayer. Gln231 is a topological domain (periplasmic). A helical transmembrane segment spans residues 232–252 (NIMMANLALGLIGVGVVGFFL). Topologically, residues 253-265 (KETFKEVGEQRNK) are cytoplasmic. Residues 266-286 (MIVAFILMLQAIIFYVLYAQM) form a helical membrane-spanning segment. The Periplasmic portion of the chain corresponds to 287-309 (PTSLNFFAINNVHSELFGMDINP). The helical transmembrane segment at 310–330 (VSLQALNPFWVIFCSPILAYL) threads the bilayer. Residues 331–348 (YTYYGNQNKDLSMPGKFT) are Cytoplasmic-facing. The chain crosses the membrane as a helical span at residues 349-369 (VGMFMCAFGFLSVAAAGNWFA). Residues 370–373 (DQAG) lie on the Periplasmic side of the membrane. Residues 374–394 (MVSVWWMVLVYLFQSLGELMI) traverse the membrane as a helical segment. Residues 395–409 (SGLGLAMVASLVPQR) lie on the Cytoplasmic side of the membrane. The chain crosses the membrane as a helical span at residues 410–430 (LMGFTMGAWFLTQAASFIIGG). Over 431–454 (YVATFSATPEHLTDPLDTLPVYTE) the chain is Periplasmic. Residues 455-475 (LFQNIGFVTLAVAIVMAITAP) form a helical membrane-spanning segment. Residues 476–495 (KLNKMMTSSQPEDAELVEQP) are Cytoplasmic-facing.

It belongs to the major facilitator superfamily. Proton-dependent oligopeptide transporter (POT/PTR) (TC 2.A.17) family. DtpB subfamily.

The protein resides in the cell inner membrane. Its function is as follows. Proton-dependent permease that transports di- and tripeptides. This chain is Dipeptide and tripeptide permease B, found in Aliivibrio fischeri (strain MJ11) (Vibrio fischeri).